Reading from the N-terminus, the 444-residue chain is Maturase K (444 aa).

The protein belongs to the intron maturase 2 family. MatK subfamily.

It is found in the plastid. The protein resides in the chloroplast. Usually encoded in the trnK tRNA gene intron. Probably assists in splicing its own and other chloroplast group II introns. The polypeptide is Maturase K (Chamaecyparis lawsoniana (Lawson false cypress)).